We begin with the raw amino-acid sequence, 338 residues long: Ferredoxin--NADP reductase (338 aa).

FAD-binding residues include aspartate 32, glutamine 40, tyrosine 45, valine 85, phenylalanine 120, aspartate 287, and threonine 327.

The protein belongs to the ferredoxin--NADP reductase type 2 family. Homodimer. The cofactor is FAD.

It carries out the reaction 2 reduced [2Fe-2S]-[ferredoxin] + NADP(+) + H(+) = 2 oxidized [2Fe-2S]-[ferredoxin] + NADPH. The polypeptide is Ferredoxin--NADP reductase (Wolbachia pipientis wMel).